The primary structure comprises 186 residues: Imidazoleglycerol-phosphate dehydratase (186 aa).

This sequence belongs to the imidazoleglycerol-phosphate dehydratase family.

The protein resides in the cytoplasm. It catalyses the reaction D-erythro-1-(imidazol-4-yl)glycerol 3-phosphate = 3-(imidazol-4-yl)-2-oxopropyl phosphate + H2O. It participates in amino-acid biosynthesis; L-histidine biosynthesis; L-histidine from 5-phospho-alpha-D-ribose 1-diphosphate: step 6/9. This chain is Imidazoleglycerol-phosphate dehydratase, found in Dictyoglomus turgidum (strain DSM 6724 / Z-1310).